Here is a 307-residue protein sequence, read N- to C-terminus: Epimerase family protein ML0860 (307 aa).

The protein belongs to the NAD(P)-dependent epimerase/dehydratase family. SDR39U1 subfamily.

This is Epimerase family protein ML0860 from Mycobacterium leprae (strain TN).